The following is a 62-amino-acid chain: Metallothionein (62 aa).

N-acetylmethionine is present on Met-1. The segment at 1–30 (MDPQDCKCETGASCSCGTTCSCSNCKCTSC) is beta. Residues Cys-6, Cys-8, Cys-14, Cys-16, Cys-20, Cys-22, Cys-25, Cys-27, Cys-30, Cys-34, Cys-35, Cys-37, Cys-38, Cys-42, Cys-45, Cys-49, Cys-51, Cys-58, Cys-60, and Cys-61 each coordinate a divalent metal cation. Residues 31–62 (KKSCCSCCPAECSKCSQGCHCEKGSKKCSCCN) are alpha.

Belongs to the metallothionein superfamily. Type 1 family.

Metallothioneins have a high content of cysteine residues that bind various heavy metals. This chain is Metallothionein (mt-a), found in Xenopus laevis (African clawed frog).